The following is a 370-amino-acid chain: Fe(2+) transport protein 2 (370 aa).

The first 25 residues, 1 to 25, serve as a signal peptide directing secretion; the sequence is MMMSSSQTPVRIAFVFLVILAATDA. Topologically, residues 26–55 are extracellular; sequence HSDHRTPPPACGGAAVGGECHSVARALRLK. Residues 56–76 traverse the membrane as a helical segment; sequence LIAIPAILAASVAGVCLPLFA. At 77–85 the chain is on the cytoplasmic side; sequence RSVPALRPD. Residues 86 to 106 traverse the membrane as a helical segment; the sequence is GGLFAVVKAFASGVILGTGYM. The Extracellular segment spans residues 107–130; the sequence is HVLPDSFNDLTSPCLPRKPWSEFP. A helical membrane pass occupies residues 131–151; that stretch reads FAAFVAMLAAVFTLMVDSLML. Over 152 to 215 the chain is Cytoplasmic; it reads TFHTRGSKGR…TTKAQLLRNR (64 aa). Residues 216–236 form a helical membrane-spanning segment; sequence VIVQVLEMGIVVHSVVIGLGM. Residues 237–247 lie on the Extracellular side of the membrane; it reads GASQNVCTIRP. The chain crosses the membrane as a helical span at residues 248–268; sequence LVAALCFHQMFEGMGLGGCIL. Topologically, residues 269–278 are cytoplasmic; it reads QAGYGGRTRS. A helical transmembrane segment spans residues 279-299; sequence ALVFFFSTTTPFGIALGLALT. Over 300–309 the chain is Extracellular; it reads RVYSDSSPTA. The helical transmembrane segment at 310-330 threads the bilayer; that stretch reads LVVVGLLNAASAGLLHYMALV. Residues 331–349 lie on the Cytoplasmic side of the membrane; it reads ELLAADFMGPKLQGNVRLQ. A helical membrane pass occupies residues 350 to 370; that stretch reads LAASLAILLGAGGMSVMAKWA.

Belongs to the ZIP transporter (TC 2.A.5) family.

Its subcellular location is the cell membrane. Functionally, iron transporter that may play a role in the uptake of iron from the rhizosphere across the plasma membrane in the root epidermal layer. The chain is Fe(2+) transport protein 2 (IRT2) from Oryza sativa subsp. japonica (Rice).